Reading from the N-terminus, the 167-residue chain is Transcription factor E (167 aa).

The HTH TFE/IIEalpha-type domain occupies 5 to 87; the sequence is ENPIHRAYLL…LWKICPESLD (83 aa).

It belongs to the TFE family. Monomer. Interaction with RNA polymerase subunits RpoF and RpoE is necessary for Tfe stimulatory transcription activity. Able to interact with Tbp and RNA polymerase in the absence of DNA promoter. Interacts both with the preinitiation and elongation complexes.

Transcription factor that plays a role in the activation of archaeal genes transcribed by RNA polymerase. Facilitates transcription initiation by enhancing TATA-box recognition by TATA-box-binding protein (Tbp), and transcription factor B (Tfb) and RNA polymerase recruitment. Not absolutely required for transcription in vitro, but particularly important in cases where Tbp or Tfb function is not optimal. It dynamically alters the nucleic acid-binding properties of RNA polymerases by stabilizing the initiation complex and destabilizing elongation complexes. Seems to translocate with the RNA polymerase following initiation and acts by binding to the non template strand of the transcription bubble in elongation complexes. This Methanothrix thermoacetophila (strain DSM 6194 / JCM 14653 / NBRC 101360 / PT) (Methanosaeta thermophila) protein is Transcription factor E.